The primary structure comprises 83 residues: Cytotoxin homolog 5V (83 aa).

The N-terminal stretch at 1–21 (MKTLLLTLVVVTIVCLDLGYT) is a signal peptide. 4 disulfides stabilise this stretch: Cys-24-Cys-43, Cys-36-Cys-61, Cys-65-Cys-76, and Cys-77-Cys-82.

This sequence belongs to the three-finger toxin family. Short-chain subfamily. Orphan group XV sub-subfamily. As to expression, expressed by the venom gland.

It is found in the secreted. It localises to the target cell membrane. Functionally, has low cytotoxic activity. This chain is Cytotoxin homolog 5V, found in Naja atra (Chinese cobra).